Here is a 357-residue protein sequence, read N- to C-terminus: Protein XRP2 (357 aa).

Positions 1 to 11 (MGCFFSKRRKP) are enriched in basic residues. The segment at 1 to 39 (MGCFFSKRRKPAQGGQQQGASQEPAAGEEKAPQYSWDQR) is disordered. A lipid anchor (N-myristoyl glycine) is attached at Gly2. Residue Cys3 is the site of S-palmitoyl cysteine attachment. A compositionally biased stretch (low complexity) spans 12–25 (AQGGQQQGASQEPA). One can recognise a C-CAP/cofactor C-like domain in the interval 32–186 (PQYSWDQRAK…TWSNIHDFTP (155 aa)). GTP-binding positions include 105–106 (GS) and 122–125 (QQFR).

This sequence belongs to the TBCC family. In terms of processing, myristoylated on Gly-2; which may be required for membrane targeting. Post-translationally, palmitoylated on Cys-3; which may be required for plasma membrane targeting.

The protein localises to the cell membrane. Acts as a GTPase-activating protein (GAP) for tubulin in concert with tubulin-specific chaperone C, but does not enhance tubulin heterodimerization. Acts as a GTPase-activating protein. May act as guanine nucleotide dissociation inhibitor towards ADP-ribosylation factor-like proteins. The protein is Protein XRP2 (RP2) of Gallus gallus (Chicken).